The following is a 107-amino-acid chain: Thiosulfate sulfurtransferase GlpE (107 aa).

The Rhodanese domain maps to 17-105 (ADDNALLVDI…WRIAFPQQVS (89 aa)). Catalysis depends on Cys-65, which acts as the Cysteine persulfide intermediate.

This sequence belongs to the GlpE family.

Its subcellular location is the cytoplasm. The catalysed reaction is thiosulfate + hydrogen cyanide = thiocyanate + sulfite + 2 H(+). It carries out the reaction thiosulfate + [thioredoxin]-dithiol = [thioredoxin]-disulfide + hydrogen sulfide + sulfite + 2 H(+). Its function is as follows. Transferase that catalyzes the transfer of sulfur from thiosulfate to thiophilic acceptors such as cyanide or dithiols. May function in a CysM-independent thiosulfate assimilation pathway by catalyzing the conversion of thiosulfate to sulfite, which can then be used for L-cysteine biosynthesis. The chain is Thiosulfate sulfurtransferase GlpE from Erwinia tasmaniensis (strain DSM 17950 / CFBP 7177 / CIP 109463 / NCPPB 4357 / Et1/99).